A 909-amino-acid chain; its full sequence is Golgin subfamily A member 6-like protein 2 (909 aa).

Over residues 1–11 the composition is skewed to pro residues; sequence MWPQPHLPPHP. Disordered stretches follow at residues 1–88, 300–362, 381–408, 425–494, and 524–909; these read MWPQ…ASHQ, ERLR…EQEE, QEKQ…RLRE, KMRE…QRLP, and EEMW…QSSL. Residues 13–31 show a composition bias toward basic and acidic residues; the sequence is MSEKTRQNKLAEAKKKFTD. The segment covering 53–77 has biased composition (polar residues); it reads NNGTNPETTTSEGCHSPEDTQQNRA. A compositionally biased stretch (basic and acidic residues) spans 78-88; sequence QLKEEKKASHQ. Residues 192–526 are a coiled coil; it reads HKKADRYIEE…EEKIRDQEEM (335 aa). Basic and acidic residues-rich tracts occupy residues 425 to 478 and 524 to 542; these read KMRE…KQEE and EEMW…MREQ. The span at 607–620 shows a compositional bias: acidic residues; that stretch reads AGGEEDAGAGEEDM. Composition is skewed to gly residues over residues 641–654 and 676–689; these read GGGG…GEDA and GAGG…GEDV. The segment covering 692-719 has biased composition (basic residues); sequence GRRRCGSSRGCRNRRRSCGNTRRCRSRR. Positions 746–755 are enriched in low complexity; that stretch reads AGAEDVAAGG. Residues 757–766 show a composition bias toward acidic residues; sequence DAGEEEDAGG. The segment covering 791-871 has biased composition (gly residues); the sequence is GAGGEDVGAG…AGGEDVGAGG (81 aa). Positions 872–892 are enriched in basic and acidic residues; the sequence is DAREGGEDTRSEREDAGEAAR.

This sequence belongs to the GOLGA6 family.

In Homo sapiens (Human), this protein is Golgin subfamily A member 6-like protein 2 (GOLGA6L2).